The sequence spans 320 residues: Cytochrome f (320 aa).

The N-terminal stretch at 1-35 (MQTRNAFSWIKKEITRSISVLLMIYIITRAPISNA) is a signal peptide. 4 residues coordinate heme: Y36, C56, C59, and H60. The chain crosses the membrane as a helical span at residues 286 to 305 (VQGLLLFLASIILAQIFLVL).

The protein belongs to the cytochrome f family. As to quaternary structure, the 4 large subunits of the cytochrome b6-f complex are cytochrome b6, subunit IV (17 kDa polypeptide, petD), cytochrome f and the Rieske protein, while the 4 small subunits are PetG, PetL, PetM and PetN. The complex functions as a dimer. Heme is required as a cofactor.

The protein resides in the plastid. The protein localises to the chloroplast thylakoid membrane. In terms of biological role, component of the cytochrome b6-f complex, which mediates electron transfer between photosystem II (PSII) and photosystem I (PSI), cyclic electron flow around PSI, and state transitions. This chain is Cytochrome f (petA), found in Vicia faba (Broad bean).